The following is a 692-amino-acid chain: Elongation factor G (692 aa).

Positions 8–283 (EMTRNIGIMA…AVLDYMPAPT (276 aa)) constitute a tr-type G domain. GTP-binding positions include 17-24 (AHIDAGKT), 81-85 (DTPGH), and 135-138 (NKMD).

This sequence belongs to the TRAFAC class translation factor GTPase superfamily. Classic translation factor GTPase family. EF-G/EF-2 subfamily.

The protein resides in the cytoplasm. Catalyzes the GTP-dependent ribosomal translocation step during translation elongation. During this step, the ribosome changes from the pre-translocational (PRE) to the post-translocational (POST) state as the newly formed A-site-bound peptidyl-tRNA and P-site-bound deacylated tRNA move to the P and E sites, respectively. Catalyzes the coordinated movement of the two tRNA molecules, the mRNA and conformational changes in the ribosome. The protein is Elongation factor G of Citrifermentans bemidjiense (strain ATCC BAA-1014 / DSM 16622 / JCM 12645 / Bem) (Geobacter bemidjiensis).